Consider the following 122-residue polypeptide: Large ribosomal subunit protein uL14 (122 aa).

Belongs to the universal ribosomal protein uL14 family. As to quaternary structure, part of the 50S ribosomal subunit. Forms a cluster with proteins L3 and L19. In the 70S ribosome, L14 and L19 interact and together make contacts with the 16S rRNA in bridges B5 and B8.

Functionally, binds to 23S rRNA. Forms part of two intersubunit bridges in the 70S ribosome. The chain is Large ribosomal subunit protein uL14 from Rickettsia bellii (strain OSU 85-389).